The primary structure comprises 295 residues: Pyridoxal 5'-phosphate synthase subunit PdxS (295 aa).

Residue Asp-25 participates in D-ribose 5-phosphate binding. Residue Lys-82 is the Schiff-base intermediate with D-ribose 5-phosphate of the active site. Residue Gly-154 coordinates D-ribose 5-phosphate. D-glyceraldehyde 3-phosphate is bound at residue Arg-166. D-ribose 5-phosphate is bound by residues Gly-215 and 236–237; that span reads GS.

This sequence belongs to the PdxS/SNZ family. In the presence of PdxT, forms a dodecamer of heterodimers.

The enzyme catalyses aldehydo-D-ribose 5-phosphate + D-glyceraldehyde 3-phosphate + L-glutamine = pyridoxal 5'-phosphate + L-glutamate + phosphate + 3 H2O + H(+). It participates in cofactor biosynthesis; pyridoxal 5'-phosphate biosynthesis. Catalyzes the formation of pyridoxal 5'-phosphate from ribose 5-phosphate (RBP), glyceraldehyde 3-phosphate (G3P) and ammonia. The ammonia is provided by the PdxT subunit. Can also use ribulose 5-phosphate and dihydroxyacetone phosphate as substrates, resulting from enzyme-catalyzed isomerization of RBP and G3P, respectively. The chain is Pyridoxal 5'-phosphate synthase subunit PdxS from Dictyoglomus turgidum (strain DSM 6724 / Z-1310).